A 299-amino-acid chain; its full sequence is Deoxyribonuclease-1-like 2 (299 aa).

Residues 1-20 (MGGPRALLAALWALEAAGTA) form the signal peptide. Residues Glu-99 and His-170 contribute to the active site. Cys-209 and Cys-245 form a disulfide bridge.

This sequence belongs to the DNase I family. Requires Mg(2+) as cofactor. Ca(2+) serves as cofactor. As to expression, preferentially expressed in the skin and up-regulated during keratinocytes differentiation. Highly abundant (at protein level) in the stratum granulosum.

The protein localises to the cytoplasm. It localises to the secreted. Divalent cation-dependent acid DNA endonuclease involved in the breakdown of the nucleus during corneocyte formation of epidermal keratinocytes. May play an immune role by eliminating harmful DNA released into the extracellular environment by damaged epidermal cells. The chain is Deoxyribonuclease-1-like 2 (DNASE1L2) from Homo sapiens (Human).